We begin with the raw amino-acid sequence, 551 residues long: Ubiquitin domain-containing protein DSK2b (551 aa).

The Ubiquitin-like domain occupies 18–93 (VAVNIRCSNG…IHMVRGSAPS (76 aa)). Residues 88–127 (RGSAPSSAPPPAPAASQTTAPSVTRGVGSDNSSNLGGASP) form a disordered region. 2 consecutive STI1 domains span residues 143-184 (GNAM…QNLM) and 197-236 (NPQMRELVDRNPELGHVLNDPSILRQTLEAARNPELMREM). Positions 294–319 (QGVTTQGSDASNNSSTPNAGTGTIPN) are enriched in polar residues. Residues 294–336 (QGVTTQGSDASNNSSTPNAGTGTIPNANPLPNPWGATGGQTTA) form a disordered region. 2 STI1 domains span residues 373 to 410 (SPLGATPDASQLSQLLQNPAISQMMQSVFSNPQYMNQL) and 414 to 449 (NPQLRSMLDSNPQLREMMQNPDFLRQFSSPEMMQQM). The segment at 455 to 475 (SLSQNRNTASQDAGQTGAATG) is disordered. Residues 465–475 (QDAGQTGAATG) show a composition bias toward low complexity. The UBA domain occupies 504-548 (PPEERYATQLQQLQEMGFYDRAENIRALLATNGNVNAAVERLLGS).

As to quaternary structure, interacts with 'Lys-48'-linked polyubiquitin chains via its UBA domain. Interacts with RPN10 via its ubiquitin-like domain. Interacts with PEX2 and PEX12. Ubiquitous.

The protein resides in the nucleus. It is found in the cytoplasm. Its function is as follows. Binds and presumably selects ubiquitin-conjugates for destruction. Prefers multiubiquitin chains rather than single ubiquitins, with a binding affinity for 'Lys-48'-linked ubiquitin chains. Acts as a ubiquitin receptor that associates with the 26S proteasomal docking subunit RPN10 for the indirect recognition of ubiquitinated substrates of ubiquitin/26S proteasome-mediated proteolysis (UPP). The polypeptide is Ubiquitin domain-containing protein DSK2b (DSK2B) (Arabidopsis thaliana (Mouse-ear cress)).